We begin with the raw amino-acid sequence, 487 residues long: 2-succinylbenzoate--CoA ligase (487 aa).

It belongs to the ATP-dependent AMP-binding enzyme family. MenE subfamily.

It carries out the reaction 2-succinylbenzoate + ATP + CoA = 2-succinylbenzoyl-CoA + AMP + diphosphate. It functions in the pathway quinol/quinone metabolism; 1,4-dihydroxy-2-naphthoate biosynthesis; 1,4-dihydroxy-2-naphthoate from chorismate: step 5/7. The protein operates within quinol/quinone metabolism; menaquinone biosynthesis. Its function is as follows. Converts 2-succinylbenzoate (OSB) to 2-succinylbenzoyl-CoA (OSB-CoA). The polypeptide is 2-succinylbenzoate--CoA ligase (Bacillus velezensis (strain DSM 23117 / BGSC 10A6 / LMG 26770 / FZB42) (Bacillus amyloliquefaciens subsp. plantarum)).